Consider the following 365-residue polypeptide: Sesquiterpene synthase 3 (365 aa).

4 residues coordinate Mg(2+): D117, N253, S257, and E261. The DDXXD motif motif lies at 117–121 (DDWSD). The NSE/DTE motif motif lies at 253–261 (NDILSYNRE). Positions 341 and 342 each coordinate (2E,6E)-farnesyl diphosphate.

This sequence belongs to the terpene synthase family. It depends on Mg(2+) as a cofactor.

The catalysed reaction is (2E,6E)-farnesyl diphosphate = delta-cadinene + diphosphate. Its function is as follows. Terpene cyclase that catalyzes the cyclization of farnesyl diphosphate (FPP) to various sesquiterpenes, including beta-elemene gamma-cadinene, delta-cadinene, and alpha-cadinene. This is Sesquiterpene synthase 3 from Postia placenta (strain ATCC 44394 / Madison 698-R) (Brown rot fungus).